We begin with the raw amino-acid sequence, 482 residues long: Matrix metalloproteinase-20 (482 aa).

Positions 1–21 (MKVLPASGLAVLVTALKFATA) are cleaved as a signal peptide. A propeptide spanning residues 22–106 (DPNLLAATPR…PRCGVPDVAN (85 aa)) is cleaved from the precursor. A Cysteine switch motif is present at residues 97–104 (PRCGVPDV). C99 provides a ligand contact to Zn(2+). Positions 163, 164, and 165 each coordinate Ca(2+). Residues H175 and D177 each contribute to the Zn(2+) site. 4 residues coordinate Ca(2+): D182, G183, R185, and T187. Position 190 (H190) interacts with Zn(2+). Ca(2+) is bound by residues E196, G197, G199, and D201. Position 203 (H203) interacts with Zn(2+). The Ca(2+) site is built by D205 and E208. Residue H225 participates in Zn(2+) binding. Residue E226 is part of the active site. Zn(2+)-binding residues include H229 and H235. Hemopexin repeat units lie at residues 292–342 (PDLC…FPQL), 343–388 (MSNV…GFPR), 390–438 (VQRI…FSGV), and 439–482 (SGHI…WIGC). Cysteines 295 and 482 form a disulfide.

The protein belongs to the peptidase M10A family. It depends on Zn(2+) as a cofactor. Ca(2+) is required as a cofactor. Autoactivates at least at the 106-Asn-|-Tyr-107 site. As to expression, expressed in the enamel organ.

The protein localises to the secreted. It is found in the extracellular space. The protein resides in the extracellular matrix. Degrades amelogenin, the major protein component of the enamel matrix and two of the macromolecules characterizing the cartilage extracellular matrix: aggrecan and the cartilage oligomeric matrix protein (COMP). May play a central role in tooth enamel formation. Cleaves aggrecan at the '360-Asn-|-Phe-361' site. This Mus musculus (Mouse) protein is Matrix metalloproteinase-20 (Mmp20).